The sequence spans 558 residues: 2-isopropylmalate synthase (558 aa).

The Pyruvate carboxyltransferase domain maps to 30 to 303; that stretch reads PIWCSVDLRD…DPKLDFSNIP (274 aa). 4 residues coordinate Mg(2+): aspartate 39, histidine 242, histidine 244, and asparagine 278. Residues 438-558 form a regulatory domain region; the sequence is LNNTLCVQDF…GLVSALNRII (121 aa).

This sequence belongs to the alpha-IPM synthase/homocitrate synthase family. LeuA type 2 subfamily. Homodimer. It depends on Mg(2+) as a cofactor.

Its subcellular location is the cytoplasm. The catalysed reaction is 3-methyl-2-oxobutanoate + acetyl-CoA + H2O = (2S)-2-isopropylmalate + CoA + H(+). It functions in the pathway amino-acid biosynthesis; L-leucine biosynthesis; L-leucine from 3-methyl-2-oxobutanoate: step 1/4. In terms of biological role, catalyzes the condensation of the acetyl group of acetyl-CoA with 3-methyl-2-oxobutanoate (2-ketoisovalerate) to form 3-carboxy-3-hydroxy-4-methylpentanoate (2-isopropylmalate). The sequence is that of 2-isopropylmalate synthase from Helicobacter hepaticus (strain ATCC 51449 / 3B1).